The sequence spans 357 residues: Biotin synthase (357 aa).

A disordered region spans residues 1–27; that stretch reads MTTAETKPATETGENAGTTGTAGTAAT. Residues 9–27 are compositionally biased toward low complexity; that stretch reads ATETGENAGTTGTAGTAAT. Residues 78 to 303 form the Radical SAM core domain; the sequence is DAVEMEGIIS…RQLLRFAGGR (226 aa). Positions 93, 97, and 100 each coordinate [4Fe-4S] cluster. [2Fe-2S] cluster is bound by residues cysteine 136, cysteine 228, and arginine 298.

It belongs to the radical SAM superfamily. Biotin synthase family. As to quaternary structure, homodimer. [4Fe-4S] cluster serves as cofactor. The cofactor is [2Fe-2S] cluster.

The catalysed reaction is (4R,5S)-dethiobiotin + (sulfur carrier)-SH + 2 reduced [2Fe-2S]-[ferredoxin] + 2 S-adenosyl-L-methionine = (sulfur carrier)-H + biotin + 2 5'-deoxyadenosine + 2 L-methionine + 2 oxidized [2Fe-2S]-[ferredoxin]. Its pathway is cofactor biosynthesis; biotin biosynthesis; biotin from 7,8-diaminononanoate: step 2/2. Its function is as follows. Catalyzes the conversion of dethiobiotin (DTB) to biotin by the insertion of a sulfur atom into dethiobiotin via a radical-based mechanism. The protein is Biotin synthase of Corynebacterium jeikeium (strain K411).